Consider the following 61-residue polypeptide: Probradykinin-1 (61 aa).

Positions 1-22 (MSFLKKSLFLVLFLGLVSFSIC) are cleaved as a signal peptide. A propeptide spanning residues 23–48 (EEEKRETEEEENKDETEEQSEEKKRF) is cleaved from the precursor. A disordered region spans residues 24 to 61 (EEKRETEEEENKDETEEQSEEKKRFEPVPPGFTPFRLT). The segment covering 30 to 42 (EEEENKDETEEQS) has biased composition (acidic residues).

It belongs to the frog skin active peptide (FSAP) family. Bradykinin-related peptide subfamily. Expressed by the skin glands.

It localises to the secreted. In terms of biological role, may produce in vitro relaxation of rat arterial smooth muscle and constriction of intestinal smooth muscle. May target bradykinin receptors (BDKRB). This is Probradykinin-1 from Pithecopus azureus (Orange-legged monkey tree frog).